We begin with the raw amino-acid sequence, 500 residues long: L-arabinose isomerase (500 aa).

Mn(2+)-binding residues include glutamate 306, glutamate 333, histidine 350, and histidine 450.

The protein belongs to the arabinose isomerase family. In terms of assembly, homohexamer. Requires Mn(2+) as cofactor.

It catalyses the reaction beta-L-arabinopyranose = L-ribulose. It functions in the pathway carbohydrate degradation; L-arabinose degradation via L-ribulose; D-xylulose 5-phosphate from L-arabinose (bacterial route): step 1/3. Catalyzes the conversion of L-arabinose to L-ribulose. The sequence is that of L-arabinose isomerase from Escherichia fergusonii (strain ATCC 35469 / DSM 13698 / CCUG 18766 / IAM 14443 / JCM 21226 / LMG 7866 / NBRC 102419 / NCTC 12128 / CDC 0568-73).